The primary structure comprises 104 residues: Large ribosomal subunit protein uL23 (104 aa).

This sequence belongs to the universal ribosomal protein uL23 family. In terms of assembly, part of the 50S ribosomal subunit. Contacts protein L29, and trigger factor when it is bound to the ribosome.

Its function is as follows. One of the early assembly proteins it binds 23S rRNA. One of the proteins that surrounds the polypeptide exit tunnel on the outside of the ribosome. Forms the main docking site for trigger factor binding to the ribosome. The sequence is that of Large ribosomal subunit protein uL23 from Ralstonia nicotianae (strain ATCC BAA-1114 / GMI1000) (Ralstonia solanacearum).